We begin with the raw amino-acid sequence, 249 residues long: Cyclin-dependent kinase inhibitor 2 (249 aa).

The tract at residues 118–180 is disordered; that stretch reads KVCTQAGEDH…MCRRSSTTSA (63 aa). Positions 161–180 are enriched in polar residues; it reads AESNQEAKQQMCRRSSTTSA.

This sequence belongs to the CDI family. ICK/KRP subfamily.

In Oryza sativa subsp. japonica (Rice), this protein is Cyclin-dependent kinase inhibitor 2 (KRP2).